Consider the following 1408-residue polypeptide: DNA-directed RNA polymerase subunit beta' (1408 aa).

Cys-70, Cys-72, Cys-85, and Cys-88 together coordinate Zn(2+). Mg(2+) contacts are provided by Asp-458, Asp-460, and Asp-462. Residues Cys-813, Cys-887, Cys-894, and Cys-897 each coordinate Zn(2+). Positions 1387 to 1408 (AELEAATATAPADAGGDSPATE) are disordered. Residues 1389-1408 (LEAATATAPADAGGDSPATE) show a composition bias toward low complexity.

The protein belongs to the RNA polymerase beta' chain family. In terms of assembly, the RNAP catalytic core consists of 2 alpha, 1 beta, 1 beta' and 1 omega subunit. When a sigma factor is associated with the core the holoenzyme is formed, which can initiate transcription. Mg(2+) serves as cofactor. Requires Zn(2+) as cofactor.

It carries out the reaction RNA(n) + a ribonucleoside 5'-triphosphate = RNA(n+1) + diphosphate. Its function is as follows. DNA-dependent RNA polymerase catalyzes the transcription of DNA into RNA using the four ribonucleoside triphosphates as substrates. The polypeptide is DNA-directed RNA polymerase subunit beta' (Polaromonas sp. (strain JS666 / ATCC BAA-500)).